The sequence spans 610 residues: Probable pleckstrin homology domain-containing family N member 1 (610 aa).

A disordered region spans residues 1–30; sequence MGNSHCVPQAPRRLRASFSRKPSLKGNRED. The N-myristoyl glycine moiety is linked to residue Gly-2. The interval 61-100 is interaction with C1QBP; that stretch reads TDIPGPEHHPENLEQPFLSVFKKGWRRTPVRNLGKVVHYS. 2 consecutive PH domains span residues 96-192 and 227-324; these read VVHY…MALL and AICA…SRRD. A Phosphotyrosine modification is found at Tyr-307. 4 disordered regions span residues 327 to 357, 371 to 431, 443 to 473, and 493 to 610; these read HLPP…SNGR, QSLP…PLPL, LDSG…ATSR, and PGPD…IQWI. Polar residues-rich tracts occupy residues 371-380 and 391-402; these read QSLPESSVPT and NQTDSNCVSTGQ. Residue Tyr-462 is modified to Phosphotyrosine. Low complexity predominate over residues 504-526; sequence VSVSVPVSESSSGISSSPGPLGS.

As to quaternary structure, found in a complex with cytochrome c mRNA and various ribosomal proteins. Interacts with C1QBP, ELAVL1 and BID. Phosphorylation is essential for its mitochondrial localization and regulates its interaction with C1QBP. In terms of tissue distribution, testis and adipose tissue (at protein level). Ubiquitous.

It is found in the cell membrane. The protein localises to the mitochondrion membrane. The protein resides in the mitochondrion. Functionally, controls the stability of the leptin mRNA harboring an AU-rich element (ARE) in its 3' UTR, in cooperation with the RNA stabilizer ELAVL1. Decreases the stability of the leptin mRNA by antagonizing the function of ELAVL1 by inducing its atypical recruitment from the nucleus to the cytosol. Binds to cardiolipin (CL), phosphatidic acid (PA), phosphatidylinositol 4-phosphate (PtdIns(4)P) and phosphatidylserine (PS). This chain is Probable pleckstrin homology domain-containing family N member 1 (Plekhn1), found in Mus musculus (Mouse).